The primary structure comprises 1441 residues: Protein clueless (1441 aa).

Disordered stretches follow at residues 1–79 (MALD…EAAT) and 106–131 (VAAN…ELES). Positions 8–22 (KNSSSAATGDANTVK) are enriched in polar residues. Residues 54–63 (AKKKGKKNRN) are compositionally biased toward basic residues. 2 stretches are compositionally biased toward low complexity: residues 64-79 (KSPP…EAAT) and 106-126 (VAAN…AASS). At serine 273 the chain carries Phosphoserine. In terms of domain architecture, Clu spans 427 to 669 (RAEDAFSSKL…RTFPPDVNFL (243 aa)). Residues 726–753 (KKQDEAKEGTKEPASETEKESPPKAITE) show a composition bias toward basic and acidic residues. Disordered regions lie at residues 726-769 (KKQD…GETK) and 961-1009 (EIHK…SGGT). The segment covering 964 to 977 (KKRTNTKYNKHKSS) has biased composition (basic residues). The span at 978–1009 (KSSGSGSKQSGQTSNQNGTSTSPSSSTASGGT) shows a compositional bias: low complexity. TPR repeat units lie at residues 1109–1142 (AYNF…LNNV), 1235–1268 (ALID…NLKY), and 1270–1303 (GAKA…EKET).

This sequence belongs to the CLU family.

It localises to the cytoplasm. Its function is as follows. mRNA-binding protein involved in proper cytoplasmic distribution of mitochondria. This is Protein clueless from Drosophila willistoni (Fruit fly).